The primary structure comprises 202 residues: Large ribosomal subunit protein bL25 (202 aa).

The segment at 1–21 (MSKESYELKAEARERVGKGSS) is disordered.

It belongs to the bacterial ribosomal protein bL25 family. CTC subfamily. Part of the 50S ribosomal subunit; part of the 5S rRNA/L5/L18/L25 subcomplex. Contacts the 5S rRNA. Binds to the 5S rRNA independently of L5 and L18.

Functionally, this is one of the proteins that binds to the 5S RNA in the ribosome where it forms part of the central protuberance. The chain is Large ribosomal subunit protein bL25 from Agrobacterium fabrum (strain C58 / ATCC 33970) (Agrobacterium tumefaciens (strain C58)).